Here is a 35-residue protein sequence, read N- to C-terminus: Photosystem II reaction center protein M (35 aa).

The helical transmembrane segment at 7–27 (GLLATILVILVPSIFLVILYV) threads the bilayer.

This sequence belongs to the PsbM family. In terms of assembly, PSII is composed of 1 copy each of membrane proteins PsbA, PsbB, PsbC, PsbD, PsbE, PsbF, PsbH, PsbI, PsbJ, PsbK, PsbL, PsbM, PsbT, PsbX, PsbY, PsbZ, Psb30/Ycf12, peripheral proteins PsbO, CyanoQ (PsbQ), PsbU, PsbV and a large number of cofactors. It forms dimeric complexes.

The protein resides in the cellular thylakoid membrane. One of the components of the core complex of photosystem II (PSII). PSII is a light-driven water:plastoquinone oxidoreductase that uses light energy to abstract electrons from H(2)O, generating O(2) and a proton gradient subsequently used for ATP formation. It consists of a core antenna complex that captures photons, and an electron transfer chain that converts photonic excitation into a charge separation. This subunit is found at the monomer-monomer interface. This chain is Photosystem II reaction center protein M, found in Synechococcus sp. (strain JA-3-3Ab) (Cyanobacteria bacterium Yellowstone A-Prime).